The following is a 449-amino-acid chain: Jacalin-related lectin 20 (449 aa).

Disordered stretches follow at residues 1–20 (MAQRLEAKGGKGGNQWDDGA) and 294–314 (APPIPPPPPTEKLQGSGGDGG). An N-acetylalanine modification is found at Ala-2. Jacalin-type lectin domains lie at 2–144 (AQRL…YFTP), 147–294 (PIKQ…HFGA), and 303–446 (TEKL…TVAP).

The protein belongs to the jacalin lectin family.

The polypeptide is Jacalin-related lectin 20 (JAL20) (Arabidopsis thaliana (Mouse-ear cress)).